The chain runs to 266 residues: GTP cyclohydrolase FolE2 1 (266 aa).

This sequence belongs to the GTP cyclohydrolase IV family.

The catalysed reaction is GTP + H2O = 7,8-dihydroneopterin 3'-triphosphate + formate + H(+). It functions in the pathway cofactor biosynthesis; 7,8-dihydroneopterin triphosphate biosynthesis; 7,8-dihydroneopterin triphosphate from GTP: step 1/1. Its function is as follows. Converts GTP to 7,8-dihydroneopterin triphosphate. The sequence is that of GTP cyclohydrolase FolE2 1 from Dechloromonas aromatica (strain RCB).